We begin with the raw amino-acid sequence, 301 residues long: Probable aspartoacylase (301 aa).

Zn(2+) is bound by residues His-13 and Glu-16. Substrate is bound by residues Arg-54 and 61 to 62 (NR). His-105 serves as a coordination point for Zn(2+). Glu-163 and Tyr-273 together coordinate substrate.

This sequence belongs to the AspA/AstE family. Aspartoacylase subfamily. Requires Zn(2+) as cofactor.

The catalysed reaction is an N-acyl-L-aspartate + H2O = a carboxylate + L-aspartate. This is Probable aspartoacylase from Prochlorococcus marinus (strain MIT 9215).